The sequence spans 158 residues: Snaclec mucetin subunit alpha (158 aa).

A signal peptide spans 1 to 23 (MGRFTFVSFGLLVVFLSLSGTGA). 3 cysteine pairs are disulfide-bonded: cysteine 27–cysteine 38, cysteine 55–cysteine 152, and cysteine 127–cysteine 144. One can recognise a C-type lectin domain in the interval 34–153 (YDRYCYQAFS…CGRENPFVCK (120 aa)).

The protein belongs to the snaclec family. In terms of assembly, dimer and tetramer of heterodimers of alpha and beta subunits ((alphabeta)(2) and (alphabeta)(4)); disulfide-linked. These two multimeric forms are found. The complex is glycosylated. As to expression, expressed by the venom gland.

Its subcellular location is the secreted. In terms of biological role, potent platelet activator that acts via GPIb (GP1BA/GP1BB). After activation by the toxin, the receptor is redistributed on platelet surface thanks to cytoskeletal translocation. The indirect activation of integrin alpha-IIb/beta-3 (ITGA2B/ITGB3) also induced by the toxin is downstream the cytoskeletal translocation of GPIb. This chain is Snaclec mucetin subunit alpha, found in Protobothrops mucrosquamatus (Taiwan habu).